A 361-amino-acid chain; its full sequence is 3-dehydroquinate synthase (361 aa).

NAD(+)-binding positions include Ser72–Lys77, Thr130–Thr131, Lys142, and Lys151. Zn(2+) is bound by residues Glu184, His247, and His264.

It belongs to the sugar phosphate cyclases superfamily. Dehydroquinate synthase family. Co(2+) is required as a cofactor. Zn(2+) serves as cofactor. It depends on NAD(+) as a cofactor.

The protein localises to the cytoplasm. It catalyses the reaction 7-phospho-2-dehydro-3-deoxy-D-arabino-heptonate = 3-dehydroquinate + phosphate. The protein operates within metabolic intermediate biosynthesis; chorismate biosynthesis; chorismate from D-erythrose 4-phosphate and phosphoenolpyruvate: step 2/7. Functionally, catalyzes the conversion of 3-deoxy-D-arabino-heptulosonate 7-phosphate (DAHP) to dehydroquinate (DHQ). This Bacillus cereus (strain G9842) protein is 3-dehydroquinate synthase.